Reading from the N-terminus, the 120-residue chain is Spermidine export protein MdtJ (120 aa).

4 helical membrane-spanning segments follow: residues 1–21 (MFYW…TLSM), 31–51 (TGFI…AFAV), 54–74 (IALG…ITLF), and 81–101 (ESLS…IVLI).

Belongs to the drug/metabolite transporter (DMT) superfamily. Small multidrug resistance (SMR) (TC 2.A.7.1) family. MdtJ subfamily. Forms a complex with MdtI.

Its subcellular location is the cell inner membrane. Functionally, catalyzes the excretion of spermidine. In Klebsiella pneumoniae subsp. pneumoniae (strain ATCC 700721 / MGH 78578), this protein is Spermidine export protein MdtJ.